We begin with the raw amino-acid sequence, 423 residues long: ER-bound oxygenase mpaB' (423 aa).

The Lumenal segment spans residues 1–22 (MSLSLPPALSELARALPYSRTQ). Residues 23-41 (WLPILVGFLIGYPLLIKAL) form a helical membrane-spanning segment. The Cytoplasmic portion of the chain corresponds to 42-423 (RYKRLGEMKK…ISRTGKCPFH (382 aa)).

The protein belongs to the mpaB oxygenase family.

The protein localises to the endoplasmic reticulum membrane. It catalyses the reaction 4-farnesyl-3,5-dihydroxy-6-methylphthalide + AH2 + 2 O2 = (4E,8E)-10-(4,6-dihydroxy-7-methyl-3-oxo-1,3-dihydro-2-benzofuran-5-yl)-4,8-dimethyldeca-4,8-dienoate + acetone + A + H2O + H(+). Its pathway is secondary metabolite biosynthesis; terpenoid biosynthesis. ER-bound oxygenase; part of the gene cluster that mediates the biosynthesis of mycophenolic acid (MPA), the first isolated antibiotic natural product in the world obtained from a culture of Penicillium brevicompactum in 1893. MpaB' catalyzes the oxidative cleavage the C19-C20 double bond in farnesyl-DHMP (FDHMP) to yield FDHMP-3C via a mycophenolic aldehyde intermediate. The first step of the pathway is the synthesis of 5-methylorsellinic acid (5MOA) by the cytosolic polyketide synthase mpaC. 5MOA is then converted to the phthalide compound 5,7-dihydroxy-4,6-dimethylphthalide (DHMP) by the endoplasmic reticulum-bound cytochrome P450 monooxygenase mpaDE. MpaDE first catalyzes hydroxylation of 5-MOA to 4,6-dihydroxy-2-(hydroxymethyl)-3-methylbenzoic acid (DHMB). MpaDE then acts as a lactone synthase that catalyzes the ring closure to convert DHMB into DHMP. The next step is the prenylation of DHMP by the Golgi apparatus-associated prenyltransferase mpaA to yield farnesyl-DHMP (FDHMP). The ER-bound oxygenase mpaB then mediates the oxidative cleavage the C19-C20 double bond in FDHMP to yield FDHMP-3C via a mycophenolic aldehyde intermediate. The O-methyltransferase mpaG catalyzes the methylation of FDHMP-3C to yield MFDHMP-3C. After the cytosolic methylation of FDHMP-3C, MFDHMP-3C enters into peroxisomes probably via free diffusion due to its low molecular weight. Upon a peroxisomal CoA ligation reaction, catalyzed by a beta-oxidation component enzyme acyl-CoA ligase ACL891, MFDHMP-3C-CoA would then be restricted to peroxisomes for the following beta-oxidation pathway steps. The peroxisomal beta-oxidation machinery than converts MFDHMP-3C-CoA into MPA_CoA, via a beta-oxidation chain-shortening process. Finally mpaH acts as a peroxisomal acyl-CoA hydrolase with high substrate specificity toward MPA-CoA to release the final product MPA. This chain is ER-bound oxygenase mpaB', found in Penicillium brevicompactum.